Reading from the N-terminus, the 292-residue chain is MPSLKDLRNRIASVKATQKITKAMQMVAAAKLRRAQNAAENARPYAERMAAVLGNLATNLTPGAETPRLLSGTGADRVHLLLVCTAERGLCGAFNSSIARLARDHARRLTAEGRTVKIICVGKKGYDILRREFRDQIVELIELRGVRQLGFDNAETIAQNLLGRFEAGEFDIATLFYSRFRSVIVQIPTAQQIIPAEIPPAGEAAQTDAAYEYEPDEGEILAALLPKNLTVQILRALLENAASEQGARMSAMDNATRNAGEMIKKQTLVYNRTRQAQITKELIEIISGAEAL.

It belongs to the ATPase gamma chain family. As to quaternary structure, F-type ATPases have 2 components, CF(1) - the catalytic core - and CF(0) - the membrane proton channel. CF(1) has five subunits: alpha(3), beta(3), gamma(1), delta(1), epsilon(1). CF(0) has three main subunits: a, b and c.

The protein resides in the cell inner membrane. Its function is as follows. Produces ATP from ADP in the presence of a proton gradient across the membrane. The gamma chain is believed to be important in regulating ATPase activity and the flow of protons through the CF(0) complex. The sequence is that of ATP synthase gamma chain from Methylobacterium sp. (strain 4-46).